A 66-amino-acid polypeptide reads, in one-letter code: Large ribosomal subunit protein bL31 (66 aa).

The Zn(2+) site is built by cysteine 16, cysteine 18, cysteine 36, and cysteine 39.

Belongs to the bacterial ribosomal protein bL31 family. Type A subfamily. As to quaternary structure, part of the 50S ribosomal subunit. Zn(2+) is required as a cofactor.

In terms of biological role, binds the 23S rRNA. This is Large ribosomal subunit protein bL31 from Bacillus licheniformis (strain ATCC 14580 / DSM 13 / JCM 2505 / CCUG 7422 / NBRC 12200 / NCIMB 9375 / NCTC 10341 / NRRL NRS-1264 / Gibson 46).